We begin with the raw amino-acid sequence, 321 residues long: p-hydroxybenzoic acid efflux pump subunit AaeA (321 aa).

A helical membrane pass occupies residues 22–42 (VVITLVIVLCAIVAIFRVWAF).

Belongs to the membrane fusion protein (MFP) (TC 8.A.1) family.

It localises to the cell inner membrane. In terms of biological role, forms an efflux pump with AaeB. In Pectobacterium atrosepticum (strain SCRI 1043 / ATCC BAA-672) (Erwinia carotovora subsp. atroseptica), this protein is p-hydroxybenzoic acid efflux pump subunit AaeA.